The primary structure comprises 325 residues: Protein ORANGE-GREEN, chloroplastic (325 aa).

The N-terminal 54 residues, 1 to 54 (MDRVLVASYPINHLIRPHSFRIDYCWSTCFTSRLNSGKERQKLSSRWRWRSMAS), are a transit peptide targeting the chloroplast. A compositionally biased stretch (low complexity) spans 53–71 (ASDSTDSSSSSSFAPSVES). The disordered stretch occupies residues 53–77 (ASDSTDSSSSSSFAPSVESDPSDKT). 2 helical membrane-spanning segments follow: residues 164 to 184 (LYYV…GLLA) and 217 to 237 (IVAS…VVEV). Positions 226–317 (VGVISALMVV…CTGMAMASEH (92 aa)) are CR-type-like. Residues 248–255 (CKYCLGTG) form a CXXCXGXG motif repeat. One copy of the CXXCXXXG motif repeat lies at 259-266 (CARCSNTG). The stretch at 292-299 (CQNCSGSG) is one CXXCXGXG motif repeat. One copy of the CXXCXXXG motif repeat lies at 303-310 (CPTCLCTG).

This sequence belongs to the orange-like family.

It localises to the plastid. The protein resides in the chloroplast membrane. In terms of biological role, involved in chloroplast differentiation in fruit flesh. This chain is Protein ORANGE-GREEN, chloroplastic, found in Cucumis melo (Muskmelon).